A 308-amino-acid polypeptide reads, in one-letter code: Methionyl-tRNA formyltransferase (308 aa).

Residue 110–113 (SLLP) coordinates (6S)-5,6,7,8-tetrahydrofolate.

The protein belongs to the Fmt family.

The enzyme catalyses L-methionyl-tRNA(fMet) + (6R)-10-formyltetrahydrofolate = N-formyl-L-methionyl-tRNA(fMet) + (6S)-5,6,7,8-tetrahydrofolate + H(+). Functionally, attaches a formyl group to the free amino group of methionyl-tRNA(fMet). The formyl group appears to play a dual role in the initiator identity of N-formylmethionyl-tRNA by promoting its recognition by IF2 and preventing the misappropriation of this tRNA by the elongation apparatus. This is Methionyl-tRNA formyltransferase from Neisseria meningitidis serogroup B (strain ATCC BAA-335 / MC58).